We begin with the raw amino-acid sequence, 403 residues long: Probable eukaryotic initiation factor 4A (403 aa).

The segment at 1 to 29 (MAQNDKIAPQDQDSFLDDQPGVRPIPSFD) is disordered. The Q motif motif lies at 26-54 (PSFDDMPLHQNLLRGIYSYGFEKPSSIQQ). In terms of domain architecture, Helicase ATP-binding spans 57-230 (IAPFTRGGDI…KKFMRDPVRI (174 aa)). 70-77 (AQSGTGKT) is a binding site for ATP. The DEAD box signature appears at 178–181 (DEAD). In terms of domain architecture, Helicase C-terminal spans 241 to 401 (GIKQFFIAVE…ELPVDFAAYL (161 aa)).

This sequence belongs to the DEAD box helicase family. eIF4A subfamily. As to quaternary structure, eIF4F is a multi-subunit complex, the composition of which varies with external and internal environmental conditions. It is composed of at least EIF4A, EIF4E and EIF4G.

It carries out the reaction ATP + H2O = ADP + phosphate + H(+). Functionally, ATP-dependent RNA helicase which is a subunit of the eIF4F complex involved in cap recognition and is required for mRNA binding to ribosome. In the current model of translation initiation, eIF4A unwinds RNA secondary structures in the 5'-UTR of mRNAs which is necessary to allow efficient binding of the small ribosomal subunit, and subsequent scanning for the initiator codon. This is Probable eukaryotic initiation factor 4A from Leishmania infantum.